The chain runs to 393 residues: MARTSKAGFPDPVLITTTEDLTGVVERLRREPFVSIDTEFVRERTYWPELCLVQLAGQDEVVVVDTLAPGIDLAPLGVLLDDPEVVKVFHAARQDLEIFLYLFGHLPAALFDTQVAAMVAGFGDQVGYDNLVASLTGAHIDKAHRFSDWSARPLSEAQIAYAAADVTHLRTVYQLLLERLEREGRLDWVASDLAVLSDPATFRPDPETLWERMRPRTSNRRMLGVLRAITAWREREAQRVNVPRQRLLKDESLLEIAATAPADVDALARIRGVSRGFAEGKSGTGILEAVAAARALPDGALPRQQKGKEGPRPSPALVALLKVLLAACCEEHDVAPRLVASSEDLDRLALEPEPDLPLLQGWRRTVFGDEALALKDGRMLLGVDGTRVKRIPA.

The 168-residue stretch at 14–181 (LITTTEDLTG…VYQLLLERLE (168 aa)) folds into the 3'-5' exonuclease domain. The HRDC domain occupies 219 to 300 (NRRMLGVLRA…AAARALPDGA (82 aa)).

Belongs to the RNase D family. Requires a divalent metal cation as cofactor.

It is found in the cytoplasm. It catalyses the reaction Exonucleolytic cleavage that removes extra residues from the 3'-terminus of tRNA to produce 5'-mononucleotides.. Its function is as follows. Exonuclease involved in the 3' processing of various precursor tRNAs. Initiates hydrolysis at the 3'-terminus of an RNA molecule and releases 5'-mononucleotides. The protein is Ribonuclease D of Gluconacetobacter diazotrophicus (strain ATCC 49037 / DSM 5601 / CCUG 37298 / CIP 103539 / LMG 7603 / PAl5).